A 492-amino-acid chain; its full sequence is Bifunctional purine biosynthesis protein PurH (492 aa).

In terms of domain architecture, MGS-like spans 1-144 (MKKAILSVSN…KNYKHVTTIV (144 aa)).

Belongs to the PurH family.

It carries out the reaction (6R)-10-formyltetrahydrofolate + 5-amino-1-(5-phospho-beta-D-ribosyl)imidazole-4-carboxamide = 5-formamido-1-(5-phospho-D-ribosyl)imidazole-4-carboxamide + (6S)-5,6,7,8-tetrahydrofolate. The catalysed reaction is IMP + H2O = 5-formamido-1-(5-phospho-D-ribosyl)imidazole-4-carboxamide. It functions in the pathway purine metabolism; IMP biosynthesis via de novo pathway; 5-formamido-1-(5-phospho-D-ribosyl)imidazole-4-carboxamide from 5-amino-1-(5-phospho-D-ribosyl)imidazole-4-carboxamide (10-formyl THF route): step 1/1. It participates in purine metabolism; IMP biosynthesis via de novo pathway; IMP from 5-formamido-1-(5-phospho-D-ribosyl)imidazole-4-carboxamide: step 1/1. The chain is Bifunctional purine biosynthesis protein PurH from Staphylococcus aureus (strain MSSA476).